A 560-amino-acid chain; its full sequence is DNA ligase B (560 aa).

Residue lysine 124 is the N6-AMP-lysine intermediate of the active site.

This sequence belongs to the NAD-dependent DNA ligase family. LigB subfamily.

It catalyses the reaction NAD(+) + (deoxyribonucleotide)n-3'-hydroxyl + 5'-phospho-(deoxyribonucleotide)m = (deoxyribonucleotide)n+m + AMP + beta-nicotinamide D-nucleotide.. Catalyzes the formation of phosphodiester linkages between 5'-phosphoryl and 3'-hydroxyl groups in double-stranded DNA using NAD as a coenzyme and as the energy source for the reaction. The chain is DNA ligase B from Shigella flexneri.